Reading from the N-terminus, the 308-residue chain is Homoserine O-acetyltransferase (308 aa).

Cys142 functions as the Acyl-thioester intermediate in the catalytic mechanism. Substrate contacts are provided by Lys163 and Ser192. His235 serves as the catalytic Proton acceptor. The active site involves Glu237. A substrate-binding site is contributed by Arg249.

It belongs to the MetA family.

The protein localises to the cytoplasm. The catalysed reaction is L-homoserine + acetyl-CoA = O-acetyl-L-homoserine + CoA. It functions in the pathway amino-acid biosynthesis; L-methionine biosynthesis via de novo pathway; O-acetyl-L-homoserine from L-homoserine: step 1/1. Transfers an acetyl group from acetyl-CoA to L-homoserine, forming acetyl-L-homoserine. This is Homoserine O-acetyltransferase from Agrobacterium fabrum (strain C58 / ATCC 33970) (Agrobacterium tumefaciens (strain C58)).